Reading from the N-terminus, the 782-residue chain is Nezukol synthase KSL3 (782 aa).

Residues D529, D533, N677, and E685 each contribute to the Mg(2+) site. The short motif at D529 to D533 is the DDXXD motif element.

It belongs to the terpene synthase family. Mg(2+) serves as cofactor. As to expression, highly expressed in leaves, and, at low levels, in stems, but barely in roots and flowers.

It carries out the reaction (+)-copalyl diphosphate = miltiradiene + diphosphate. It catalyses the reaction (+)-copalyl diphosphate + H2O = nezukol + diphosphate. It functions in the pathway secondary metabolite biosynthesis; terpenoid biosynthesis. Its function is as follows. Involved in the biosynthesis of ent-kaurene diterpenoids natural products such as oridonin, miltiradiene, eriocalyxin B and nezukol, known to exhibit antitumor, anti-inflammatory and antibacterial activities. Catalyzes the conversion of (+)-copalyl diphosphate ((+)-CPP) to nezukol and miltiradiene. The reaction mechanism proceeds via the ionization of the diphosphate group of (+)-CPP, followed by formation of an intermediary pimar-15-en-8-yl(+) carbocation and neutralization of the carbocation by water capture at C-8 to yield nezukol. Can interact with ent-copalyl diphosphate (ent-CPP) but seems unable to use it as substrate. This chain is Nezukol synthase KSL3, found in Isodon rubescens (Rabdosia rubescens).